Reading from the N-terminus, the 170-residue chain is ATP synthase subunit b (170 aa).

The helical transmembrane segment at 25–45 (LIPNGTFFAVLIIFLIVLGVI) threads the bilayer. Positions 121–147 (EVAQTLTQADQQLSAQGDQVRSGLESS) are disordered. Positions 122–139 (VAQTLTQADQQLSAQGDQ) are enriched in polar residues.

This sequence belongs to the ATPase B chain family. F-type ATPases have 2 components, F(1) - the catalytic core - and F(0) - the membrane proton channel. F(1) has five subunits: alpha(3), beta(3), gamma(1), delta(1), epsilon(1). F(0) has three main subunits: a(1), b(2) and c(10-14). The alpha and beta chains form an alternating ring which encloses part of the gamma chain. F(1) is attached to F(0) by a central stalk formed by the gamma and epsilon chains, while a peripheral stalk is formed by the delta and b chains.

The protein localises to the cell membrane. F(1)F(0) ATP synthase produces ATP from ADP in the presence of a proton or sodium gradient. F-type ATPases consist of two structural domains, F(1) containing the extramembraneous catalytic core and F(0) containing the membrane proton channel, linked together by a central stalk and a peripheral stalk. During catalysis, ATP synthesis in the catalytic domain of F(1) is coupled via a rotary mechanism of the central stalk subunits to proton translocation. Functionally, component of the F(0) channel, it forms part of the peripheral stalk, linking F(1) to F(0). This Mycolicibacterium smegmatis (strain ATCC 700084 / mc(2)155) (Mycobacterium smegmatis) protein is ATP synthase subunit b.